The chain runs to 104 residues: L-rhamnose mutarotase (104 aa).

Tyrosine 18 is a binding site for substrate. The Proton donor role is filled by histidine 22. Substrate-binding positions include tyrosine 41 and 76–77 (WW).

The protein belongs to the rhamnose mutarotase family. In terms of assembly, homodimer.

Its subcellular location is the cytoplasm. The catalysed reaction is alpha-L-rhamnose = beta-L-rhamnose. It participates in carbohydrate metabolism; L-rhamnose metabolism. In terms of biological role, involved in the anomeric conversion of L-rhamnose. The sequence is that of L-rhamnose mutarotase from Citrobacter koseri (strain ATCC BAA-895 / CDC 4225-83 / SGSC4696).